The chain runs to 1377 residues: MASGRDERPPWRLGRLRLLPPPPLLLLLLLLRSSAQAAHIKKAEATTTTVGGSEAAEGQFDHYYHEAALGEALEAAAAAGPPGLARLFSIGSSVEGRPLWVLRLTAGLGPPPTAAAGLDAAGPLLPGRPQVKLVGNMHGDETVSRQVLVYLARELASGYRRGDPRLVRLLNTTDVYLLPSLNPDGFERAREGDCGLGDSGPPGTSGRDNSRGRDLNRSFPDQFSTGEPPSLDEVPEVRALIDWIRRNKFVLSGNLHGGSVVASYPFDDSPEHKTTGLYSKTSDDEVFRYLAKAYASNHPIMKTGEPHCPGDEDETFKDGITNGAHWYDVEGGMQDYNYVWANCFEITLELSCCKYPPASQLRQEWENNRESLITLIEKVHIGIKGFVKDSVTGSGLENATISVAGINHNITTGRFGDFHRLLVPGTYNLTALSTGYMPLTINNIMVKEGPATEMDFSLRPTVMSVMPGSTEAVTTPGTVAVPNIPPGTPSSHQPIQPKDFHHHHFPDMEIFLRRFANEYPNITRLYSLGKSVESRELYVMEISDNPGVHEPGEPEFKYIGNMHGNEVVGRELLLNLIEYLCKNFGTDPEVTDLVRSTRIHLMPSMNPDGYEKSQEGDSISVVGRNNSNNFDLNRNFPDQFVPITEPTQPETIAVMSWVKAYPFVLSANLHGGSLVVNYPYDDNEQGVATYSKSPDDAVFQQIALSYSKENSQMFQGRPCKDMYLNEYFPHGITNGASWYNVPGGMQDWNYLQTNCFEVTIELGCVKYPFENELPKYWEQNRRSLIQFMKQVHQGVKGFVLDATDGRGILNATLSVAEINHPVTTYKAGDYWRLLVPGTYKITASARGYNPVTKNVTVRSEGAVQVNFTLVRSSADANNESKKGRGHSTSTDDTSDPTSKEFEALIKHLSAENGLEGFMLSSSSDLALYRYHSYKDLSEFLRGLVMNYPHITNLTTLGQSVEYRHIWSLEISNKPNISEPEEPKIRFVAGIHGNAPVGTELLLALAEFLCLNYKRNPVVTQLVDRTRIVIVPSLNPDGRERAQEKDCTSKTGHTNAHGKDLDTDFTSNASQPETKAIIENLIQKQDFSLSIALDGGSVLVTYPYDKPVQTVENKETLKHLASLYANNHPSMHMGQPSCPNNSDENIPGGVMRGAEWHSHLGSMKDYSVTYGHCPEITVYTSCCYFPSAAQLPALWAENKKSLLSMLVEVHKGVHGLVKDKAGKPISKAVIVLNEGIKVYTKEGGYFHVLLAPGVHNINAIADGYQQQHTQVFVHHDAASSVVIVFDTDNRIFGLPRELVVTVSGATMSALILTACIIWCICSIKSNRHKDGFHRLRQHHDEYEDEIRMMSTGSKKSLLSHEFQDETDTEEETLYSSKH.

The N-terminal stretch at Met1 to Ala37 is a signal peptide. At Ala38 to Glu1296 the chain is on the extracellular side. Positions His62–Val379 constitute a Peptidase M14 1 domain. 2 residues coordinate Zn(2+): His138 and Glu141. The Cell attachment site motif lies at Arg161–Asp163. 2 N-linked (GlcNAc...) asparagine glycosylation sites follow: Asn171 and Asn216. Residues Arg188 to Leu231 are disordered. His256 lines the Zn(2+) pocket. Position 264 is a phosphotyrosine (Tyr264). Ser269 is modified (phosphoserine). The active-site Proton donor/acceptor is Glu349. Asn398, Asn409, Asn428, and Asn521 each carry an N-linked (GlcNAc...) asparagine glycan. A Peptidase M14 2 domain is found at His501–Val791. His563 and Glu566 together coordinate Zn(2+). N-linked (GlcNAc...) asparagine glycosylation is present at Asn625. His670 serves as a coordination point for Zn(2+). Glu761 serves as the catalytic Proton donor/acceptor. N-linked (GlcNAc...) asparagine glycans are attached at residues Asn810, Asn854, Asn866, Asn878, Asn952, and Asn975. The segment at Ala874 to Ser898 is disordered. The Peptidase M14 3 domain maps to Arg929–Val1208. Basic and acidic residues predominate over residues Arg1038–Thr1047. The segment at Arg1038–Phe1064 is disordered. N-linked (GlcNAc...) asparagine glycosylation is found at Asn1067 and Asn1139. Residues Leu1297–Trp1317 form a helical membrane-spanning segment. 3 S-palmitoyl cysteine lipidation sites follow: Cys1314, Cys1318, and Cys1320. Residues Cys1318–His1377 lie on the Cytoplasmic side of the membrane. Residues Ser1355 and Ser1358 each carry the phosphoserine modification. The tract at residues Leu1356–His1377 is disordered. Thr1365 and Thr1367 each carry phosphothreonine.

This sequence belongs to the peptidase M14 family. Zn(2+) is required as a cofactor.

Its subcellular location is the cell membrane. The enzyme catalyses Releases C-terminal Arg and Lys from polypeptides.. The chain is Carboxypeptidase D (Cpd) from Mus musculus (Mouse).